The following is a 50-amino-acid chain: Small ribosomal subunit protein uS14 (50 aa).

Zn(2+)-binding residues include cysteine 15, cysteine 18, cysteine 33, and cysteine 36.

It belongs to the universal ribosomal protein uS14 family. Zinc-binding uS14 subfamily. In terms of assembly, part of the 30S ribosomal subunit. It depends on Zn(2+) as a cofactor.

In terms of biological role, binds 16S rRNA, required for the assembly of 30S particles. The polypeptide is Small ribosomal subunit protein uS14 (Methanothermobacter thermautotrophicus (strain ATCC 29096 / DSM 1053 / JCM 10044 / NBRC 100330 / Delta H) (Methanobacterium thermoautotrophicum)).